Consider the following 447-residue polypeptide: Tubulin beta chain (447 aa).

Residues glutamine 11, glutamate 69, serine 138, glycine 142, threonine 143, glycine 144, asparagine 204, and asparagine 226 each contribute to the GTP site. Glutamate 69 contacts Mg(2+).

It belongs to the tubulin family. As to quaternary structure, dimer of alpha and beta chains. A typical microtubule is a hollow water-filled tube with an outer diameter of 25 nm and an inner diameter of 15 nM. Alpha-beta heterodimers associate head-to-tail to form protofilaments running lengthwise along the microtubule wall with the beta-tubulin subunit facing the microtubule plus end conferring a structural polarity. Microtubules usually have 13 protofilaments but different protofilament numbers can be found in some organisms and specialized cells. Mg(2+) serves as cofactor.

The protein resides in the cytoplasm. It localises to the cytoskeleton. Its function is as follows. Tubulin is the major constituent of microtubules, a cylinder consisting of laterally associated linear protofilaments composed of alpha- and beta-tubulin heterodimers. Microtubules grow by the addition of GTP-tubulin dimers to the microtubule end, where a stabilizing cap forms. Below the cap, tubulin dimers are in GDP-bound state, owing to GTPase activity of alpha-tubulin. The chain is Tubulin beta chain (TUB2) from Penicillium digitatum (Green mold).